A 444-amino-acid polypeptide reads, in one-letter code: Dihydroorotate dehydrogenase (quinone), mitochondrial (444 aa).

The chain crosses the membrane as a helical span at residues 34-56 (GGASRYIIGTASVLVGAMAGFYI). FMN is bound by residues 124–128 (AGLDK) and Thr148. Lys128 provides a ligand contact to substrate. 173–177 (NRYGF) provides a ligand contact to substrate. FMN contacts are provided by Asn220 and Asn250. A substrate-binding site is contributed by 250-255 (NVSSPN). Catalysis depends on Ser253, which acts as the Nucleophile. Residues Lys301 and Ser329 each contribute to the FMN site. 330–331 (NT) is a substrate binding site. Residues Gly355, Gly385, and 406 to 407 (YT) contribute to the FMN site.

This sequence belongs to the dihydroorotate dehydrogenase family. Type 2 subfamily. The cofactor is FMN.

It localises to the mitochondrion inner membrane. It carries out the reaction (S)-dihydroorotate + a quinone = orotate + a quinol. It functions in the pathway pyrimidine metabolism; UMP biosynthesis via de novo pathway; orotate from (S)-dihydroorotate (quinone route): step 1/1. Its function is as follows. Catalyzes the conversion of dihydroorotate to orotate with quinone as electron acceptor. This is Dihydroorotate dehydrogenase (quinone), mitochondrial (URA9) from Eremothecium gossypii (strain ATCC 10895 / CBS 109.51 / FGSC 9923 / NRRL Y-1056) (Yeast).